The primary structure comprises 822 residues: Protein smoothened (822 aa).

Positions M1–A28 are cleaved as a signal peptide. The Extracellular portion of the chain corresponds to V29 to Y212. N34 carries N-linked (GlcNAc...) asparagine glycosylation. Cystine bridges form between C42–C157, C48–C112, C56–C105, C96–C132, and C125–C147. The FZ domain occupies K43 to E160. Residue D73 participates in cholesterol binding. The N-linked (GlcNAc...) asparagine glycan is linked to N167. 3 disulfide bridges follow: C172-C192, C196-C274, and C293-C369. A helical membrane pass occupies residues I213–A233. At D234–Y241 the chain is on the cytoplasmic side. A helical membrane pass occupies residues P242 to A262. The Extracellular segment spans residues Q263–C293. The helical transmembrane segment at V294–L314 threads the bilayer. The Cytoplasmic portion of the chain corresponds to T315–K335. A helical membrane pass occupies residues T336 to A356. Over N357–G381 the chain is Extracellular. Y373 lines the cholesterol pocket. A helical transmembrane segment spans residues F382–V402. Topologically, residues M403 to R430 are cytoplasmic. Residues L431 to Y451 form a helical membrane-spanning segment. The Extracellular portion of the chain corresponds to D452 to S503. A disulfide bond links C469 and C486. An N-linked (GlcNAc...) asparagine glycan is attached at N472. The helical transmembrane segment at M504–W524 threads the bilayer. The Cytoplasmic segment spans residues K525 to F822. Residues M645–P687 are disordered. A compositionally biased stretch (basic residues) spans K647–E658.

It belongs to the G-protein coupled receptor Fz/Smo family. Monomer.

The protein localises to the cell membrane. It is found in the cell projection. Its subcellular location is the cilium. Its function is as follows. G protein-coupled receptor which associates with the patched protein (ptch) to transduce Hedgehog protein signaling. Binding of sonic hedgehog (shh) to its receptor patched prevents inhibition of smoothened (smo) by patched. When active, smo binds to and sequesters protein kinase A catalytic subunit prkaca at the cell membrane, preventing prkaca-mediated phosphorylation of gli transcription factors which releases the gli proteins from prkaca-mediated inhibition and allows for transcriptional activation of Hedgehog signaling pathway target genes. Required for the development of primary and secondary motoneurons but not for the specification of midbrain dopaminergic neurons or development of the medial floor plate. Required for induction of lateral floor plate and posterior motoneurons, anterior neural plate patterning, dorsoventral forebrain patterning, dorsoventral retinal patterning, optic stalk development, and formation of the forebrain primary axonal scaffold. Required to regulate the formation of a subset of cerebellar neurons by limiting wnt1 expression which controls cerebellar expression of transcription factor olig2. Required for development of the pancreas. Required for muscle development. Required for the formation of a single continuous intestinal lumen from multiple discontinuous lumens, probably by regulating remodeling through rab11a-mediated trafficking to facilitate lumen fusion. Required for development of the adenohypophysis. Required for anteroposterior patterning of the otic vesicle. Required for development of the anterior craniofacial skeleton. Required for patterning of the caudal fin. Required during gastrulation and early somitogenesis stages to promote cardiomyocyte formation by regulating the specification of myocardial progenitors. Required for induction of arterial endothelial cell formation by repressing venous cell fate. The polypeptide is Protein smoothened (Danio rerio (Zebrafish)).